The sequence spans 1058 residues: MSSSPLSKKRRVSGPDPKPGSNCSSAQSVLSEVSSVPTNGMAKNGSEADIDESLYSRQLYVLGHEAMKMLQTSSVLVSGLRGLGVEIAKNIILGGVKAVTLHDQGTTQWADLSSQFYLREEDIGKNRAEVSQPRLAELNSYVPVTAYTGPLVEDFLSGFQVVVLTNSPLEEQLRVGEFCHSRGIKLVVADTRGLFGQLFCDFGEEMVLTDSNGEQPLSAMVSMVTKDNPGVVTCLDEARHGFETGDFVSFSEVQGMVQLNGCQPIEIKVLGPYTFSICDTSNFSDYIRGGIVSQVKVPKKISFKSLPASLAEPDFVMTDFAKYSRPAQLHIGFQALHQFCAQHNRPPRPRNEEDATELVTLAQAVNARSPPAVQQDNVDEDLIRKLAYVAAGDLAPINAFIGGLAAQEVMKACSGKFMPIMQWLYFDALECLPEDKEALTEDKCLPRQNRYDGQVAVFGSDLQEKLGKQKYFLVGAGAIGCELLKNFAMIGLGCGEGGEVVVTDMDTIEKSNLNRQFLFRPWDVTKLKSDTAAAAVRQMNPYIQVTSHQNRVGPDTERIYDDDFFQNLDGVANALDNVDARMYMDRRCVYYRKPLLESGTLGTKGNVQVVIPFLTESYSSSQDPPEKSIPICTLKNFPNAIEHTLQWARDEFEGLFKQPAENVNQYLTDSKFVERTLRLAGTQPLEVLEAVQRSLVLQRPQTWGDCVTWACHHWHTQYCNNIRQLLHNFPPDQLTSSGAPFWSGPKRCPHPLTFDVNNTLHLDYVMAAANLFAQTYGLTGSQDRAAVASLLQSVQVPEFTPKSGVKIHVSDQELQSANASVDDSRLEELKATLPSPDKLPGFKMYPIDFEKDDDSNFHMDFIVAASNLRAENYDISPADRHKSKLIAGKIIPAIATTTAAVVGLVCLELYKVVQGHQQLDSYKNGFLNLALPFFGFSEPLAAPRHQYYNQEWTLWDRFEVQGLQPNGEEMTLKQFLDYFKTEHKLEITMLSQGVSMLYSFFMPAAKLKERLDQPMTEIVSRVSKRKLGRHVRALVLELCCNDESGEDVEVPYVRYTIR.

The tract at residues Met-1 to Ser-46 is disordered. Ser-2 is modified (N-acetylserine). Ser-4, Ser-13, Ser-21, Ser-24, and Ser-46 each carry phosphoserine. Over residues Ser-24–Val-36 the composition is skewed to low complexity. Tyr-55 bears the Phosphotyrosine mark. A run of 2 repeats spans residues Gly-63 to Phe-199 and Gly-459 to Ile-611. Residues Gly-63–Ile-611 are 2 approximate repeats. ATP is bound by residues Ala-478, Asp-504, Arg-515, Lys-528, and Asp-576–Asn-577. An N6-succinyllysine modification is found at Lys-528. The active-site Glycyl thioester intermediate is the Cys-632. Lys-671 carries the N6-acetyllysine modification. Thr-800 carries the phosphothreonine modification. Phosphoserine occurs at positions 810, 816, 820, and 835. Lys-980 is modified (N6-acetyllysine).

This sequence belongs to the ubiquitin-activating E1 family. As to quaternary structure, monomer. Interacts with GAN (via BTB domain). Post-translationally, ISGylated.

The protein resides in the cytoplasm. The protein localises to the mitochondrion. It is found in the nucleus. It catalyses the reaction ATP + ubiquitin + [E1 ubiquitin-activating enzyme]-L-cysteine = AMP + diphosphate + S-ubiquitinyl-[E1 ubiquitin-activating enzyme]-L-cysteine.. The protein operates within protein modification; protein ubiquitination. Catalyzes the first step in ubiquitin conjugation to mark cellular proteins for degradation through the ubiquitin-proteasome system. Activates ubiquitin by first adenylating its C-terminal glycine residue with ATP, and thereafter linking this residue to the side chain of a cysteine residue in E1, yielding a ubiquitin-E1 thioester and free AMP. Essential for the formation of radiation-induced foci, timely DNA repair and for response to replication stress. Promotes the recruitment of TP53BP1 and BRCA1 at DNA damage sites. This Rattus norvegicus (Rat) protein is Ubiquitin-like modifier-activating enzyme 1.